The chain runs to 357 residues: Isopentenyl-diphosphate delta-isomerase (357 aa).

Substrate is bound at residue 12–13; the sequence is RK. FMN is bound by residues serine 70, 71–73, serine 101, and asparagine 130; that span reads SMT. Substrate is bound at residue 101–103; sequence SMR. Position 165 (glutamine 165) interacts with substrate. Glutamate 166 contributes to the Mg(2+) binding site. FMN contacts are provided by residues lysine 197, 289–291, and 310–311; these read GIR and AQ.

It belongs to the IPP isomerase type 2 family. As to quaternary structure, homooctamer. Dimer of tetramers. The cofactor is FMN. NADPH serves as cofactor. Requires Mg(2+) as cofactor.

The protein resides in the cytoplasm. It carries out the reaction isopentenyl diphosphate = dimethylallyl diphosphate. Functionally, involved in the biosynthesis of isoprenoids. Catalyzes the 1,3-allylic rearrangement of the homoallylic substrate isopentenyl (IPP) to its allylic isomer, dimethylallyl diphosphate (DMAPP). This is Isopentenyl-diphosphate delta-isomerase from Chlorobaculum parvum (strain DSM 263 / NCIMB 8327) (Chlorobium vibrioforme subsp. thiosulfatophilum).